We begin with the raw amino-acid sequence, 172 residues long: Small ribosomal subunit protein uS5 (172 aa).

The S5 DRBM domain maps to 17-80 (LREKMISVNR…EQARRNMFKV (64 aa)).

Belongs to the universal ribosomal protein uS5 family. Part of the 30S ribosomal subunit. Contacts proteins S4 and S8.

In terms of biological role, with S4 and S12 plays an important role in translational accuracy. Its function is as follows. Located at the back of the 30S subunit body where it stabilizes the conformation of the head with respect to the body. This Burkholderia lata (strain ATCC 17760 / DSM 23089 / LMG 22485 / NCIMB 9086 / R18194 / 383) protein is Small ribosomal subunit protein uS5.